The primary structure comprises 225 residues: NAD(P)H-quinone oxidoreductase subunit K, chloroplastic (225 aa).

Positions 43, 44, 108, and 139 each coordinate [4Fe-4S] cluster.

It belongs to the complex I 20 kDa subunit family. As to quaternary structure, NDH is composed of at least 16 different subunits, 5 of which are encoded in the nucleus. [4Fe-4S] cluster is required as a cofactor.

Its subcellular location is the plastid. It is found in the chloroplast thylakoid membrane. It carries out the reaction a plastoquinone + NADH + (n+1) H(+)(in) = a plastoquinol + NAD(+) + n H(+)(out). The enzyme catalyses a plastoquinone + NADPH + (n+1) H(+)(in) = a plastoquinol + NADP(+) + n H(+)(out). In terms of biological role, NDH shuttles electrons from NAD(P)H:plastoquinone, via FMN and iron-sulfur (Fe-S) centers, to quinones in the photosynthetic chain and possibly in a chloroplast respiratory chain. The immediate electron acceptor for the enzyme in this species is believed to be plastoquinone. Couples the redox reaction to proton translocation, and thus conserves the redox energy in a proton gradient. This is NAD(P)H-quinone oxidoreductase subunit K, chloroplastic from Carica papaya (Papaya).